We begin with the raw amino-acid sequence, 270 residues long: L-cystine-binding protein TcyK (270 aa).

A signal peptide spans 1–20 (MKTKTAFMAILFSLITVLSA). C21 carries the N-palmitoyl cysteine lipid modification. The S-diacylglycerol cysteine moiety is linked to residue C21.

The protein belongs to the bacterial solute-binding protein 3 family. The complex is composed of two ATP-binding proteins (TcyN), two transmembrane proteins (TcyL and TcyM) and two solute-binding proteins (TcyJ and TcyK).

Its subcellular location is the cell membrane. In terms of biological role, part of the ABC transporter complex TcyJKLMN involved in L-cystine import. Is also involved in cystathionine, djenkolate, and S-methylcysteine transport. The protein is L-cystine-binding protein TcyK (tcyK) of Bacillus subtilis (strain 168).